The following is a 292-amino-acid chain: Phosphatidylglycerol--prolipoprotein diacylglyceryl transferase (292 aa).

Helical transmembrane passes span 18–38 (LFGA…GLLI), 67–87 (LLTW…VLFY), 105–125 (GGMS…AFCL), and 129–149 (ISIL…LFLG). Arginine 150 is an a 1,2-diacyl-sn-glycero-3-phospho-(1'-sn-glycerol) binding site. The next 3 helical transmembrane spans lie at 193–213 (QLYE…ILIW), 222–242 (GAVT…VEFV), and 266–286 (GLTM…YFML).

Belongs to the Lgt family.

It is found in the cell inner membrane. It carries out the reaction L-cysteinyl-[prolipoprotein] + a 1,2-diacyl-sn-glycero-3-phospho-(1'-sn-glycerol) = an S-1,2-diacyl-sn-glyceryl-L-cysteinyl-[prolipoprotein] + sn-glycerol 1-phosphate + H(+). Its pathway is protein modification; lipoprotein biosynthesis (diacylglyceryl transfer). Catalyzes the transfer of the diacylglyceryl group from phosphatidylglycerol to the sulfhydryl group of the N-terminal cysteine of a prolipoprotein, the first step in the formation of mature lipoproteins. In Cereibacter sphaeroides (strain ATCC 17025 / ATH 2.4.3) (Rhodobacter sphaeroides), this protein is Phosphatidylglycerol--prolipoprotein diacylglyceryl transferase.